The chain runs to 229 residues: Uracil-DNA glycosylase (229 aa).

Catalysis depends on D65, which acts as the Proton acceptor.

It belongs to the uracil-DNA glycosylase (UDG) superfamily. UNG family.

It is found in the cytoplasm. It catalyses the reaction Hydrolyzes single-stranded DNA or mismatched double-stranded DNA and polynucleotides, releasing free uracil.. In terms of biological role, excises uracil residues from the DNA which can arise as a result of misincorporation of dUMP residues by DNA polymerase or due to deamination of cytosine. The chain is Uracil-DNA glycosylase from Limosilactobacillus reuteri (strain DSM 20016) (Lactobacillus reuteri).